The following is a 670-amino-acid chain: DNA ligase (670 aa).

Residues 36–40 (DAQYD), 85–86 (SL), and Glu116 contribute to the NAD(+) site. Residue Lys118 is the N6-AMP-lysine intermediate of the active site. Residues Arg139, Glu174, Lys290, and Lys314 each coordinate NAD(+). Positions 408, 411, 426, and 431 each coordinate Zn(2+). In terms of domain architecture, BRCT spans 591 to 670 (STDQTLSGKT…QDFVKLLQQQ (80 aa)).

The protein belongs to the NAD-dependent DNA ligase family. LigA subfamily. Mg(2+) is required as a cofactor. Requires Mn(2+) as cofactor.

It carries out the reaction NAD(+) + (deoxyribonucleotide)n-3'-hydroxyl + 5'-phospho-(deoxyribonucleotide)m = (deoxyribonucleotide)n+m + AMP + beta-nicotinamide D-nucleotide.. DNA ligase that catalyzes the formation of phosphodiester linkages between 5'-phosphoryl and 3'-hydroxyl groups in double-stranded DNA using NAD as a coenzyme and as the energy source for the reaction. It is essential for DNA replication and repair of damaged DNA. This is DNA ligase from Desulforamulus reducens (strain ATCC BAA-1160 / DSM 100696 / MI-1) (Desulfotomaculum reducens).